The chain runs to 385 residues: FAD-dependent monooxygenase verC2 (385 aa).

Residues R27, D227, and A240 each coordinate FAD. N320 carries N-linked (GlcNAc...) asparagine glycosylation. A helical membrane pass occupies residues W365–I385.

It belongs to the paxM FAD-dependent monooxygenase family. The cofactor is FAD.

Its subcellular location is the membrane. It participates in secondary metabolite biosynthesis; terpenoid biosynthesis. The protein operates within mycotoxin biosynthesis. Its function is as follows. FAD-dependent monooxygenase; part of the gene cluster that mediates the biosynthesis of the neurotoxin verrucosidin, a methylated alpha-pyrone polyketide that inhibits oxidative phosphorylation in mitochondria and thereby causes neurological diseases. The carbon backbone of verrucosidin is synthesized by the HR-PKS verA, and further modified by the other verrucodidin cluster enzymes. The sequence is that of FAD-dependent monooxygenase verC2 from Penicillium polonicum.